A 496-amino-acid polypeptide reads, in one-letter code: MEKSQGYLELDKSWRHGFLYPLIFQEYIYALAHEQGLNRSILLENTDHDNKYSSLIVKRLITLIHQQNHFLIFDNDSNQNPFWKHNNNLYSQTISEGFVIIVEIPFSPRFVDSLEEKKKILKSNNLRSIHSIFPFLEDQILHLNFVANILIPYPIHLEIVVQSLRYRVKDASSLHLLRFFLFTLNKSISSFSKRNQRFFLFLYNSHVYEYESTFLFLRNKTSHLRSTSSGAFLERIFFYGKIKHLIEVFANDFQAILWLFKDPFMHYVRYQGKSILASKRTSLRMNKWKYYLVNFWQCQFYVWSQPGRVSINQLSNHSLDFLGYLSSVRRNPLAVRSQMLENSFLTDNAIKKFDIIVLLISLIGSLAKAKFCNVLGHPLSKPARADSSDSDIIERFVRICRNLSHYHSGSSKKKSLYRIKYILRLSCARTLARKHKTTVRSFLKRLGSELLEEFLTEDGQVISLIFPRTSSTSWRLYRGGIWYLDITCINDLANHE.

It belongs to the intron maturase 2 family. MatK subfamily.

Its subcellular location is the plastid. The protein localises to the chloroplast. In terms of biological role, usually encoded in the trnK tRNA gene intron. Probably assists in splicing its own and other chloroplast group II introns. The chain is Maturase K from Paeonia lactiflora (Chinese peony).